Here is a 420-residue protein sequence, read N- to C-terminus: 4-hydroxy-3-methylbut-2-en-1-yl diphosphate synthase (flavodoxin) (420 aa).

Positions 307, 310, 353, and 360 each coordinate [4Fe-4S] cluster.

This sequence belongs to the IspG family. Requires [4Fe-4S] cluster as cofactor.

The catalysed reaction is (2E)-4-hydroxy-3-methylbut-2-enyl diphosphate + oxidized [flavodoxin] + H2O + 2 H(+) = 2-C-methyl-D-erythritol 2,4-cyclic diphosphate + reduced [flavodoxin]. Its pathway is isoprenoid biosynthesis; isopentenyl diphosphate biosynthesis via DXP pathway; isopentenyl diphosphate from 1-deoxy-D-xylulose 5-phosphate: step 5/6. Its function is as follows. Converts 2C-methyl-D-erythritol 2,4-cyclodiphosphate (ME-2,4cPP) into 1-hydroxy-2-methyl-2-(E)-butenyl 4-diphosphate. The protein is 4-hydroxy-3-methylbut-2-en-1-yl diphosphate synthase (flavodoxin) of Brucella suis biovar 1 (strain 1330).